We begin with the raw amino-acid sequence, 500 residues long: Protein PIGMENT DEFECTIVE 338, chloroplastic (500 aa).

A chloroplast-targeting transit peptide spans 1–63; sequence MQTLLCQPCK…FAFRGFSICR (63 aa). S1 motif domains follow at residues 156–265, 283–351, and 362–431; these read KPGD…LSSR, NEPI…LSEK, and GTLL…LSIA.

This sequence belongs to the bacterial ribosomal protein bS1 family. Interacts with CRP1 and PRFB3. Present in leaves (at protein level). Confined to leaf chlorenchyma cells.

The protein resides in the plastid. The protein localises to the chloroplast. In terms of biological role, RNA-binding protein that acts as an RNA chaperone to remodel RNA structure and activates their translation. Required for seed pigmentation. Necessary for chloroplast development and subsequent photosynthetic electron flow, as well as for non-photochemical quenching (NPQ). Rubisco regulatory factor which regulates the concerted biogenesis of NDH, PSI (including PsaA, PsaB, PsaD, PsaF, PsaL, PsaG, PsaK and NdhH) and Cytb(6)f (including PetA, PetB, PetC and PetD) complexes. Binds specifically to and involved in the post-transcriptional regulation of plastid-encoded mRNAs (e.g. rbcL, petA, petB, petD and Ycf1), thus modulating expression, cellular localization/compartmentalization, and photosynthetic function. The polypeptide is Protein PIGMENT DEFECTIVE 338, chloroplastic (Arabidopsis thaliana (Mouse-ear cress)).